The following is a 454-amino-acid chain: Serine/threonine-protein phosphatase C23G10.1 (454 aa).

Positions 196, 198, 224, and 256 each coordinate Mn(2+). His-257 serves as the catalytic Proton donor. 2 residues coordinate Mn(2+): His-308 and His-382.

This sequence belongs to the PPP phosphatase family. PP-1 subfamily. The cofactor is Mn(2+).

The enzyme catalyses O-phospho-L-seryl-[protein] + H2O = L-seryl-[protein] + phosphate. The catalysed reaction is O-phospho-L-threonyl-[protein] + H2O = L-threonyl-[protein] + phosphate. The polypeptide is Serine/threonine-protein phosphatase C23G10.1 (Caenorhabditis elegans).